Consider the following 228-residue polypeptide: Putative N-acetylmannosamine-6-phosphate 2-epimerase (228 aa).

The protein belongs to the NanE family.

The catalysed reaction is an N-acyl-D-glucosamine 6-phosphate = an N-acyl-D-mannosamine 6-phosphate. The protein operates within amino-sugar metabolism; N-acetylneuraminate degradation; D-fructose 6-phosphate from N-acetylneuraminate: step 3/5. Converts N-acetylmannosamine-6-phosphate (ManNAc-6-P) to N-acetylglucosamine-6-phosphate (GlcNAc-6-P). The sequence is that of Putative N-acetylmannosamine-6-phosphate 2-epimerase from Lactiplantibacillus plantarum (strain ATCC BAA-793 / NCIMB 8826 / WCFS1) (Lactobacillus plantarum).